The chain runs to 299 residues: Acidic endochitinase Pun g 14, amyloplastic (299 aa).

The N-terminal 26 residues, 1 to 26 (MAKTLPFSRALLLSLSILLVARAISA), are a transit peptide targeting the amyloplast. The 273-residue stretch at 27-299 (GDIAIYWGQN…TYSTTIKDQV (273 aa)) folds into the GH18 domain. Disulfide bonds link Cys-46-Cys-93 and Cys-76-Cys-83. Residue Glu-153 is the Proton donor of the active site. A disulfide bond links Cys-185 and Cys-216.

This sequence belongs to the glycosyl hydrolase 18 family. Chitinase class III subfamily. Monomer. As to expression, highly expressed in seeds and to a lesser extent in the skin of the pomegranate fruit (at protein level). Not expressed in leaves or flesh of the fruit (at protein level).

The protein localises to the plastid. It localises to the amyloplast. It catalyses the reaction Random endo-hydrolysis of N-acetyl-beta-D-glucosaminide (1-&gt;4)-beta-linkages in chitin and chitodextrins.. Activity is not affected by addition of 10 mM Ca(2+) or removal of Ca(2+). Hydrolyzes chitin. Probable calcium storage protein of the seeds. Binds calcium ions with high capacity and low affinity. Involved in seed germination. This Punica granatum (Pomegranate) protein is Acidic endochitinase Pun g 14, amyloplastic.